Consider the following 32-residue polypeptide: Sodium channel neurotoxin BmK NT2 (32 aa).

Residues 2-32 (RDAYIAKPENCVYHCAGNEGCNNLCTCNGAT) enclose the LCN-type CS-alpha/beta domain.

In terms of tissue distribution, expressed by the venom gland.

The protein localises to the secreted. In terms of biological role, alpha toxins bind voltage-independently at site-3 of sodium channels (Nav) and inhibit the inactivation of the activated channels, thereby blocking neuronal transmission. This toxin dose-dependently delays inactivation of voltage-gated sodium channels (Nav) (EC(50)=0.91 uM), and shifts the steady-state activation and inactivation to hyperpolarized direction. In addition, it dose-dependently alters calcium dynamics and increases phosphorylation of MAP kinases 1/3 (MAPK1/MAPK3) and cAMP-response element binding (CREB) proteins in neocortical neurons. This effect is eliminated by tetrodotoxin, a Nav blocker. In Olivierus martensii (Manchurian scorpion), this protein is Sodium channel neurotoxin BmK NT2.